The primary structure comprises 464 residues: Argininosuccinate lyase (464 aa).

This sequence belongs to the lyase 1 family. Argininosuccinate lyase subfamily.

The protein resides in the cytoplasm. The enzyme catalyses 2-(N(omega)-L-arginino)succinate = fumarate + L-arginine. The protein operates within amino-acid biosynthesis; L-arginine biosynthesis; L-arginine from L-ornithine and carbamoyl phosphate: step 3/3. This Streptococcus suis (strain 98HAH33) protein is Argininosuccinate lyase.